The chain runs to 380 residues: Dynactin subunit 2 (380 aa).

Positions 1-40 (MADPKFQNLPGIAYDQPDVYETPDDPETDTSDYYEEEPEN) are disordered. Acidic residues predominate over residues 21–40 (ETPDDPETDTSDYYEEEPEN). Coiled-coil stretches lie at residues 100-135 (VQKC…QSYD) and 353-377 (ETFA…TAIS).

It belongs to the dynactin subunit 2 family. As to quaternary structure, subunit of dynactin, a multiprotein complex associated with dynein.

The protein localises to the cytoplasm. Its subcellular location is the cytoskeleton. The protein resides in the membrane. Functionally, modulates cytoplasmic dynein binding to an organelle, and plays a role in prometaphase chromosome alignment and spindle organization during mitosis. May play a role in synapse formation during brain development. The sequence is that of Dynactin subunit 2 from Drosophila pseudoobscura pseudoobscura (Fruit fly).